The primary structure comprises 405 residues: Fragilysin (405 aa).

The signal sequence occupies residues 1–25 (MFILNFNKMKNVKLLLMLGTAALLA). Histidine 356 contributes to the Zn(2+) binding site. Residue glutamate 357 is part of the active site. Zn(2+) is bound by residues histidine 360 and histidine 366.

Belongs to the peptidase M10C family. Zn(2+) is required as a cofactor.

Its subcellular location is the secreted. The catalysed reaction is Broad proteolytic specificity, bonds hydrolyzed includes -Gly-|-Leu-, -Met-|-Leu-, -Phe-|-Leu-, -Cys-|-Leu-, -Leu-|-Gly-.. Its function is as follows. Diarrheal toxin that hydrolyzes gelatin, azocoll, actin, tropomyosin, and fibrinogen. The sequence is that of Fragilysin (btfP) from Bacteroides fragilis.